Here is a 353-residue protein sequence, read N- to C-terminus: Ig alpha-1 chain C region (353 aa).

Positions 6–98 (PKVFPLSLCS…HYTNPSQDVT (93 aa)) constitute an Ig-like 1 domain. Disulfide bonds link cysteine 26/cysteine 85 and cysteine 77/cysteine 101. A disordered region spans residues 96–121 (DVTVPCRVPSTPPTPSPSTPPTPSPP). Pro residues predominate over residues 105–121 (STPPTPSPSTPPTPSPP). 3 cysteine pairs are disulfide-bonded: cysteine 123–cysteine 180, cysteine 147–cysteine 204, and cysteine 250–cysteine 313. Ig-like domains are found at residues 125 to 220 (PRLS…ATLS) and 228 to 330 (PEVH…KTID). A glycan (N-linked (GlcNAc...) asparagine) is linked at asparagine 144. Asparagine 340 carries an N-linked (GlcNAc...) asparagine glycan. Residue cysteine 352 coordinates 3-hydroxy-L-kynurenine.

Monomeric or polymeric. Post-translationally, 3-Hydroxykynurenine, an oxidized tryptophan metabolite that is common in biological fluids, reacts with alpha-1-microglobulin to form heterogeneous polycyclic chromophores including hydroxanthommatin. The chromophore reacts with accessible cysteines forming non-reducible thioether cross-links with Ig alpha-1 chain C region Cys-352.

In terms of biological role, ig alpha is the major immunoglobulin class in body secretions. It may serve both to defend against local infection and to prevent access of foreign antigens to the general immunologic system. This chain is Ig alpha-1 chain C region (IGHA1), found in Gorilla gorilla gorilla (Western lowland gorilla).